The following is a 164-amino-acid chain: Probable Brix domain-containing ribosomal biogenesis protein (164 aa).

Residues 1 to 164 (MIITTSRKPS…IKTVKILDIE (164 aa)) form the Brix domain.

Probably involved in the biogenesis of the ribosome. The polypeptide is Probable Brix domain-containing ribosomal biogenesis protein (Methanococcus maripaludis (strain DSM 14266 / JCM 13030 / NBRC 101832 / S2 / LL)).